Reading from the N-terminus, the 337-residue chain is MANRGGRHARTEETENAINYVQCDGLAVMKMVKHCHEESNNMDLAQGALLGLVVDKCLEITNCFPFPKSGDETMDEEMYQLTVMRRLRRVNVDHLHVGWYQSSDVGNSLSLALLESQYHYQTSIEESVVVVYDTQKSSRGFLCLKAYRLTPQAIQMYKDGDFTPEAFRNLKVGYESLFAEIPIVIKNSPLTNIMMSELNELLPEDKGHNFLDLGTASVLENHMRSLIERVDELYQEAVRYNKYQQVVFKQDTEKHRALAKLAAENAVRTSKGEPTVSEEEVIKQFRPMPVPARLTATITSGQINTHAQHIAQFCSQSLAKLFITESLQNAKEAKEIK.

The MPN domain maps to 21–153 (VQCDGLAVMK…LKAYRLTPQA (133 aa)).

This sequence belongs to the eIF-3 subunit H family. In terms of assembly, component of the eukaryotic translation initiation factor 3 (eIF-3) complex. The eIF-3 complex interacts with pix. Interacts with mxt.

Its subcellular location is the cytoplasm. Component of the eukaryotic translation initiation factor 3 (eIF-3) complex, which is involved in protein synthesis of a specialized repertoire of mRNAs and, together with other initiation factors, stimulates binding of mRNA and methionyl-tRNAi to the 40S ribosome. The eIF-3 complex specifically targets and initiates translation of a subset of mRNAs involved in cell proliferation. The sequence is that of Eukaryotic translation initiation factor 3 subunit H from Drosophila willistoni (Fruit fly).